Consider the following 371-residue polypeptide: Cytoplasmic tRNA 2-thiolation protein 1 (371 aa).

It belongs to the TtcA family. CTU1/NCS6/ATPBD3 subfamily.

The protein localises to the cytoplasm. It functions in the pathway tRNA modification; 5-methoxycarbonylmethyl-2-thiouridine-tRNA biosynthesis. Its function is as follows. Plays a central role in 2-thiolation of mcm(5)S(2)U at tRNA wobble positions of tRNA(Lys), tRNA(Glu) and tRNA(Gln). Directly binds tRNAs and probably acts by catalyzing adenylation of tRNAs, an intermediate required for 2-thiolation. It is unclear whether it acts as a sulfurtransferase that transfers sulfur from thiocarboxylated URM1 onto the uridine of tRNAs at wobble position. Prior mcm(5) tRNA modification by the elongator complex is required for 2-thiolation. May also be involved in protein urmylation. The protein is Cytoplasmic tRNA 2-thiolation protein 1 of Kluyveromyces lactis (strain ATCC 8585 / CBS 2359 / DSM 70799 / NBRC 1267 / NRRL Y-1140 / WM37) (Yeast).